The sequence spans 307 residues: Urease accessory protein UreD (307 aa).

Belongs to the UreD family. As to quaternary structure, ureD, UreF and UreG form a complex that acts as a GTP-hydrolysis-dependent molecular chaperone, activating the urease apoprotein by helping to assemble the nickel containing metallocenter of UreC. The UreE protein probably delivers the nickel.

It is found in the cytoplasm. Its function is as follows. Required for maturation of urease via the functional incorporation of the urease nickel metallocenter. The chain is Urease accessory protein UreD from Prochlorococcus marinus (strain NATL1A).